The sequence spans 478 residues: Protein nucleotidyltransferase YdiU (478 aa).

Residues Gly84, Gly86, Arg87, Lys107, Asp119, Gly120, Arg170, and Arg177 each contribute to the ATP site. Residue Asp246 is the Proton acceptor of the active site. 2 residues coordinate Mg(2+): Asn247 and Asp256. ATP is bound at residue Asp256.

Belongs to the SELO family. Mg(2+) serves as cofactor. Mn(2+) is required as a cofactor.

The enzyme catalyses L-seryl-[protein] + ATP = 3-O-(5'-adenylyl)-L-seryl-[protein] + diphosphate. It catalyses the reaction L-threonyl-[protein] + ATP = 3-O-(5'-adenylyl)-L-threonyl-[protein] + diphosphate. The catalysed reaction is L-tyrosyl-[protein] + ATP = O-(5'-adenylyl)-L-tyrosyl-[protein] + diphosphate. It carries out the reaction L-histidyl-[protein] + UTP = N(tele)-(5'-uridylyl)-L-histidyl-[protein] + diphosphate. The enzyme catalyses L-seryl-[protein] + UTP = O-(5'-uridylyl)-L-seryl-[protein] + diphosphate. It catalyses the reaction L-tyrosyl-[protein] + UTP = O-(5'-uridylyl)-L-tyrosyl-[protein] + diphosphate. Nucleotidyltransferase involved in the post-translational modification of proteins. It can catalyze the addition of adenosine monophosphate (AMP) or uridine monophosphate (UMP) to a protein, resulting in modifications known as AMPylation and UMPylation. The chain is Protein nucleotidyltransferase YdiU from Shigella boydii serotype 18 (strain CDC 3083-94 / BS512).